Reading from the N-terminus, the 100-residue chain is Noncompact myelin-associated protein (100 aa).

Residues 1 to 28 lie on the Extracellular side of the membrane; sequence MTTATTLGDAVFSLNMTRGEDALYKSSG. The chain crosses the membrane as a helical span at residues 29-49; sequence AIVAAIVVVVIIIVTLVLILL. The Cytoplasmic segment spans residues 50-100; sequence KMYNRRMRTRRELEPKSPKPPVPPALDPSSNGSQQPATVTFDPANVHVETR. Residues 58–100 are disordered; the sequence is TRRELEPKSPKPPVPPALDPSSNGSQQPATVTFDPANVHVETR.

Glycosylated. Found in the peripheral nervous system (PNS) Schwann cells (at protein level). Expressed in the PNS, primarily limited to Schwann cells.

The protein resides in the cell membrane. In terms of biological role, plays a role in myelin formation. The chain is Noncompact myelin-associated protein (Ncmap) from Mus musculus (Mouse).